The primary structure comprises 144 residues: Large ribosomal subunit protein uL24 (144 aa).

Residues methionine 1–proline 22 are disordered. Residues lysine 13–proline 22 are compositionally biased toward basic residues.

This sequence belongs to the universal ribosomal protein uL24 family.

The sequence is that of Large ribosomal subunit protein uL24 (RPL26) from Littorina littorea (Common periwinkle).